Here is a 389-residue protein sequence, read N- to C-terminus: Indole-3-acetate monooxygenase (389 aa).

The protein belongs to the HpaH/HsaA monooxygenase family.

It catalyses the reaction (indol-3-yl)acetate + NADH + O2 + H(+) = 2-hydroxy-(1H-indol-3-yl)acetate + NAD(+) + H2O. It carries out the reaction indole + NADH + O2 + H(+) = indoxyl + NAD(+) + H2O. Its function is as follows. Involved in the degradation of the plant hormone indole-3-acetic acid (IAA). Catalyzes the first step of the pathway, the conversion of IAA to 2-hydroxy-IAA (2-OH-IAA). Can also convert indole to indoxyl, which spontaneously dimerizes in the presence of oxygen to form the blue pigment indigo. This Pseudomonas putida (Arthrobacter siderocapsulatus) protein is Indole-3-acetate monooxygenase.